A 100-amino-acid chain; its full sequence is Large ribosomal subunit protein uL23 (100 aa).

This sequence belongs to the universal ribosomal protein uL23 family. In terms of assembly, part of the 50S ribosomal subunit. Contacts protein L29, and trigger factor when it is bound to the ribosome.

One of the early assembly proteins it binds 23S rRNA. One of the proteins that surrounds the polypeptide exit tunnel on the outside of the ribosome. Forms the main docking site for trigger factor binding to the ribosome. In Dechloromonas aromatica (strain RCB), this protein is Large ribosomal subunit protein uL23.